The sequence spans 227 residues: Phosphatidylethanolamine-binding protein 4 (227 aa).

Residues Met-1–Gly-22 form the signal peptide. Asn-169 carries N-linked (GlcNAc...) (complex) asparagine glycosylation. The important for secretion stretch occupies residues Glu-188 to Cys-227. Residues Asp-202 to Cys-227 form a disordered region. Over residues Pro-209–Gln-221 the composition is skewed to basic and acidic residues.

The protein belongs to the phosphatidylethanolamine-binding protein family.

The protein localises to the secreted. Its function is as follows. Promotes AKT phosphorylation, suggesting a possible role in the PI3K-AKT signaling pathway. This Homo sapiens (Human) protein is Phosphatidylethanolamine-binding protein 4 (PEBP4).